The sequence spans 313 residues: Porphobilinogen deaminase (313 aa).

S-(dipyrrolylmethanemethyl)cysteine is present on Cys242.

Belongs to the HMBS family. As to quaternary structure, monomer. Requires dipyrromethane as cofactor.

It catalyses the reaction 4 porphobilinogen + H2O = hydroxymethylbilane + 4 NH4(+). The protein operates within porphyrin-containing compound metabolism; protoporphyrin-IX biosynthesis; coproporphyrinogen-III from 5-aminolevulinate: step 2/4. Tetrapolymerization of the monopyrrole PBG into the hydroxymethylbilane pre-uroporphyrinogen in several discrete steps. The protein is Porphobilinogen deaminase of Escherichia coli O17:K52:H18 (strain UMN026 / ExPEC).